The primary structure comprises 219 residues: Thiamine-phosphate synthase (219 aa).

Residues 44–48 (QFREK) and Asn79 contribute to the 4-amino-2-methyl-5-(diphosphooxymethyl)pyrimidine site. Positions 80 and 99 each coordinate Mg(2+). Ser117 contacts 4-amino-2-methyl-5-(diphosphooxymethyl)pyrimidine. Position 143 to 145 (143 to 145 (TST)) interacts with 2-[(2R,5Z)-2-carboxy-4-methylthiazol-5(2H)-ylidene]ethyl phosphate. Lys146 contacts 4-amino-2-methyl-5-(diphosphooxymethyl)pyrimidine. 2-[(2R,5Z)-2-carboxy-4-methylthiazol-5(2H)-ylidene]ethyl phosphate is bound by residues Gly175 and 195–196 (IS).

The protein belongs to the thiamine-phosphate synthase family. The cofactor is Mg(2+).

It catalyses the reaction 2-[(2R,5Z)-2-carboxy-4-methylthiazol-5(2H)-ylidene]ethyl phosphate + 4-amino-2-methyl-5-(diphosphooxymethyl)pyrimidine + 2 H(+) = thiamine phosphate + CO2 + diphosphate. It carries out the reaction 2-(2-carboxy-4-methylthiazol-5-yl)ethyl phosphate + 4-amino-2-methyl-5-(diphosphooxymethyl)pyrimidine + 2 H(+) = thiamine phosphate + CO2 + diphosphate. The catalysed reaction is 4-methyl-5-(2-phosphooxyethyl)-thiazole + 4-amino-2-methyl-5-(diphosphooxymethyl)pyrimidine + H(+) = thiamine phosphate + diphosphate. It functions in the pathway cofactor biosynthesis; thiamine diphosphate biosynthesis; thiamine phosphate from 4-amino-2-methyl-5-diphosphomethylpyrimidine and 4-methyl-5-(2-phosphoethyl)-thiazole: step 1/1. Its function is as follows. Condenses 4-methyl-5-(beta-hydroxyethyl)thiazole monophosphate (THZ-P) and 2-methyl-4-amino-5-hydroxymethyl pyrimidine pyrophosphate (HMP-PP) to form thiamine monophosphate (TMP). This Bacillus cereus (strain AH820) protein is Thiamine-phosphate synthase.